The sequence spans 230 residues: Thiamine-triphosphatase (230 aa).

Residue Ala2 is modified to N-acetylalanine. The CYTH domain maps to 5–201; sequence LIEVERKFLP…AKLIVYLQRF (197 aa). Mg(2+) is bound by residues Glu7 and Glu9. Residues Lys11, Arg55, Arg57, Lys65, and Arg125 each contribute to the substrate site. Asp145, Glu157, and Glu159 together coordinate Mg(2+). Glu157 is a substrate binding site. Lys193 serves as a coordination point for substrate.

It belongs to the ThTPase family. In terms of assembly, monomer. Requires Mg(2+) as cofactor.

The protein resides in the cytoplasm. The enzyme catalyses thiamine triphosphate + H2O = thiamine diphosphate + phosphate + H(+). Hydrolase highly specific for thiamine triphosphate (ThTP). The sequence is that of Thiamine-triphosphatase (THTPA) from Macaca fascicularis (Crab-eating macaque).